The sequence spans 269 residues: Auxin-responsive protein IAA26 (269 aa).

The span at Tyr-25–Leu-40 shows a compositional bias: basic and acidic residues. Disordered stretches follow at residues Tyr-25–Ile-55 and Cys-76–Glu-146. Positions Leu-38–Leu-42 match the EAR-like (transcriptional repression) motif. 2 stretches are compositionally biased toward polar residues: residues Asn-80–His-93 and Leu-117–Asn-136. Over residues Lys-137 to Glu-146 the composition is skewed to basic and acidic residues. The PB1 domain maps to Gly-151–Ser-250.

Belongs to the Aux/IAA family. As to quaternary structure, homodimers and heterodimers. Interacts with phytochrome A. Interacts with TPL.

It localises to the nucleus. Its function is as follows. Aux/IAA proteins are short-lived transcriptional factors that function as repressors of early auxin response genes at low auxin concentrations. Repression is thought to result from the interaction with auxin response factors (ARFs), proteins that bind to the auxin-responsive promoter element (AuxRE). Formation of heterodimers with ARF proteins may alter their ability to modulate early auxin response genes expression. In Arabidopsis thaliana (Mouse-ear cress), this protein is Auxin-responsive protein IAA26 (IAA26).